Reading from the N-terminus, the 526-residue chain is Medium/long-chain-fatty-acid--[acyl-carrier-protein] ligase MbtM (526 aa).

N6-acetyllysine; by Pat occurs at positions 260 and 511.

The protein belongs to the ATP-dependent AMP-binding enzyme family. Post-translationally, acetylated on Lys-511 and Lys-260 by Pat. Lys-511 is the major acetylation site. Acetylation results in the inactivation of the enzyme.

The catalysed reaction is a long-chain fatty acid + holo-[ACP] + ATP = a long-chain fatty acyl-[ACP] + AMP + diphosphate. It catalyses the reaction a medium-chain fatty acid + holo-[ACP] + ATP = a medium-chain fatty acyl-[ACP] + AMP + diphosphate. It carries out the reaction hexadecanoate + holo-[ACP] + ATP = hexadecanoyl-[ACP] + AMP + diphosphate. The enzyme catalyses hexadecanoate + ATP + H(+) = hexadecanoyl-AMP + diphosphate. The catalysed reaction is hexadecanoyl-AMP + holo-[ACP] = hexadecanoyl-[ACP] + AMP + H(+). It catalyses the reaction dodecanoate + holo-[ACP] + ATP = dodecanoyl-[ACP] + AMP + diphosphate. It carries out the reaction dodecanoate + ATP + H(+) = dodecanoyl-AMP + diphosphate. The enzyme catalyses dodecanoyl-AMP + holo-[ACP] = dodecanoyl-[ACP] + AMP + H(+). It participates in siderophore biosynthesis; mycobactin biosynthesis. Its activity is regulated as follows. Reversibly inactivated by post-translational acetylation by Pat in a cAMP-dependent manner and reactivated by Sir2 deacylase. In terms of biological role, activates lipidic moieties required for mycobactin biosynthesis. Converts medium- to long-chain aliphatic fatty acids into acyl adenylate, which is further transferred on to the phosphopantetheine arm of the carrier protein MbtL. Shows a strong preference for palmitic acid (C16) and cannot use short-chain fatty acids. Proceeds via a Bi Uni Uni Bi ping-pong mechanism. During the first half-reaction (adenylation), fatty acid binds first to the free enzyme, followed by ATP and the release of pyrophosphate to form the adenylate intermediate. During the second half-reaction (ligation), holo-MbtL binds to the enzyme followed by the release of products AMP and acylated MbtL. The protein is Medium/long-chain-fatty-acid--[acyl-carrier-protein] ligase MbtM of Mycolicibacterium smegmatis (strain ATCC 700084 / mc(2)155) (Mycobacterium smegmatis).